The following is a 511-amino-acid chain: Keratin, type II cytoskeletal 72 (511 aa).

A head region spans residues 1-124 (MSRQLTHFPR…DPEIQRVRAQ (124 aa)). Residues 125–160 (EREQIKALNNKFASFIDKVRFLEQQNQVLETKWNLL) form a coil 1A region. An IF rod domain is found at 125-438 (EREQIKALNN…KLLESEECRM (314 aa)). The tract at residues 161–179 (QQLDLNNCRKNLEPIYEGY) is linker 1. A coil 1B region spans residues 180-271 (ISNLQKQLEM…CLYEGEITQI (92 aa)). Positions 272 to 295 (QSHISDTSIVLSMDNNRDLDLDSI) are linker 12. The coil 2 stretch occupies residues 296 to 434 (IAEVRAQYEE…ATYRKLLESE (139 aa)). The interval 435 to 511 (ECRMSGEYPN…SSCATKKASR (77 aa)) is tail. The segment at 486–511 (GSCGSELKDPLAKTSGSSCATKKASR) is disordered.

It belongs to the intermediate filament family. Heterotetramer of two type I and two type II keratins. As to expression, highly expressed in hair follicles from scalp and eyebrow. Also expressed in palmoplantar epidermis. Not expressed in face skin despite the presence of fine hairs histologically. In hair, it is specifically present in the inner root sheath (IRS) of the hair follicle. Present in the IRS cuticle, but not in Henle or Huxley layers of the IRS. In the IRS cuticle, its presence is delayed up to the height of the apex of the dermal papilla (at protein level).

Has a role in hair formation. Specific component of keratin intermediate filaments in the inner root sheath (IRS) of the hair follicle. In Homo sapiens (Human), this protein is Keratin, type II cytoskeletal 72 (KRT72).